Consider the following 311-residue polypeptide: NAD kinase (311 aa).

D89 serves as the catalytic Proton acceptor. Residues 89–90 (DG), R94, 163–164 (NE), D193, and 204–209 (TAYAFS) each bind NAD(+).

It belongs to the NAD kinase family. Requires a divalent metal cation as cofactor.

The protein localises to the cytoplasm. The catalysed reaction is NAD(+) + ATP = ADP + NADP(+) + H(+). Its function is as follows. Involved in the regulation of the intracellular balance of NAD and NADP, and is a key enzyme in the biosynthesis of NADP. Catalyzes specifically the phosphorylation on 2'-hydroxyl of the adenosine moiety of NAD to yield NADP. The chain is NAD kinase from Mycobacterium leprae (strain Br4923).